The chain runs to 244 residues: U11/U12 small nuclear ribonucleoprotein 35 kDa protein (244 aa).

Positions 51–129 (LTLFVARLNL…HEIFVDYELE (79 aa)) constitute an RRM domain. Over residues 146 to 162 (GKKESGQLRFGGRDRPF) the composition is skewed to basic and acidic residues. The segment at 146–244 (GKKESGQLRF…KSRDKRDRSK (99 aa)) is disordered. Residue lysine 172 forms a Glycyl lysine isopeptide (Lys-Gly) (interchain with G-Cter in SUMO2) linkage. 2 stretches are compositionally biased toward basic and acidic residues: residues 173 to 185 (NEPH…ERRE) and 192 to 244 (RHWD…DRSK).

Component of the U11/U12 snRNPs that are part of the U12-type spliceosome.

The protein resides in the nucleus. The sequence is that of U11/U12 small nuclear ribonucleoprotein 35 kDa protein (Snrnp35) from Mus musculus (Mouse).